Consider the following 201-residue polypeptide: FMN-dependent NADH:quinone oxidoreductase (201 aa).

FMN-binding positions include Ser10, 16 to 18, 96 to 99, and 140 to 143; these read SQS, MYNF, and SRGG.

The protein belongs to the azoreductase type 1 family. In terms of assembly, homodimer. It depends on FMN as a cofactor.

It catalyses the reaction 2 a quinone + NADH + H(+) = 2 a 1,4-benzosemiquinone + NAD(+). The enzyme catalyses N,N-dimethyl-1,4-phenylenediamine + anthranilate + 2 NAD(+) = 2-(4-dimethylaminophenyl)diazenylbenzoate + 2 NADH + 2 H(+). Functionally, quinone reductase that provides resistance to thiol-specific stress caused by electrophilic quinones. Its function is as follows. Also exhibits azoreductase activity. Catalyzes the reductive cleavage of the azo bond in aromatic azo compounds to the corresponding amines. The polypeptide is FMN-dependent NADH:quinone oxidoreductase (Salmonella arizonae (strain ATCC BAA-731 / CDC346-86 / RSK2980)).